A 362-amino-acid chain; its full sequence is Alternative oxidase, mitochondrial (362 aa).

The transit peptide at 1–64 (MNTPKVNILH…RNFSTTSVTR (64 aa)) directs the protein to the mitochondrion. A helical transmembrane segment spans residues 156-176 (LVRFIFLESIAGVPGMVAGML). Residues E163, E202, and H205 each contribute to the Fe cation site. The helical transmembrane segment at 222–242 (LILGAQGVFFNAMFLSYLISP) threads the bilayer. The Fe cation site is built by E253, E310, and H313.

It belongs to the alternative oxidase family. Homodimer; disulfide-linked. It depends on Fe cation as a cofactor.

The protein resides in the mitochondrion inner membrane. Its function is as follows. Catalyzes cyanide-resistant oxygen consumption. May increase respiration when the cytochrome respiratory pathway is restricted, or in response to low temperatures. This Neurospora crassa (strain ATCC 24698 / 74-OR23-1A / CBS 708.71 / DSM 1257 / FGSC 987) protein is Alternative oxidase, mitochondrial (aod-1).